The chain runs to 84 residues: PAMP-induced secreted peptide 2 (84 aa).

Residues Met1–Ser24 form the signal peptide. Positions Lys50–His84 are disordered. Over residues Glu58–Arg70 the composition is skewed to basic and acidic residues. 4-hydroxyproline is present on residues Pro77 and Pro79.

In terms of processing, contains 4-hydroxyproline; hydroxylated on Pro-77 and Pro-79.

Its subcellular location is the secreted. It localises to the extracellular space. The protein resides in the apoplast. In terms of biological role, endogenous secreted peptide that acts as elicitor of immune response and positive regulator of defense response. Amplifies the immune response triggered by flg22, the active epitope of bacterial flagellin. Acts as a negative regulator of root growth. This chain is PAMP-induced secreted peptide 2, found in Arabidopsis thaliana (Mouse-ear cress).